Consider the following 260-residue polypeptide: NH(3)-dependent NAD(+) synthetase (260 aa).

31–38 (GLSGGLDS) contributes to the ATP binding site. Mg(2+) is bound at residue Asp-37. Arg-112 is a binding site for deamido-NAD(+). Residue Thr-132 participates in ATP binding. Glu-137 provides a ligand contact to Mg(2+). Residues Lys-161 and Ser-183 each contribute to the ATP site.

Belongs to the NAD synthetase family. As to quaternary structure, homodimer.

It carries out the reaction deamido-NAD(+) + NH4(+) + ATP = AMP + diphosphate + NAD(+) + H(+). It functions in the pathway cofactor biosynthesis; NAD(+) biosynthesis; NAD(+) from deamido-NAD(+) (ammonia route): step 1/1. Functionally, catalyzes the ATP-dependent amidation of deamido-NAD to form NAD. Uses ammonia as a nitrogen source. The chain is NH(3)-dependent NAD(+) synthetase from Helicobacter pylori (strain P12).